The chain runs to 340 residues: Sulfotransferase ppzF (340 aa).

It participates in secondary metabolite biosynthesis. Functionally, sulfotransferase; part of the gene cluster that mediates the biosynthesis of pyrrolopyrazines, secondary metabolites showing insecticidal activity. The role of ppzF within the pathway has still to be determined. The single multifunctional NRPS ppzA is sufficient to produce peramine via condensation of 1-pyrroline-5-carboxylate and arginine, N-methylation of the alpha-amino group of arginine and reduction of the thioester and the cyclization to form an iminium ion resulting in release from the peptide synthetase. Deprotonation of this intermediate and oxidation of the pyrroline ring would give rise to peramine. In Epichloe species that produce only peramine, the peramine synthetase gene is not localized in a gene cluster, in contrast to Metarhizium species that contain additional pyrrolopyrazine biosynthesis genes. The 2-oxoglutarate-Fe(II) type oxidoreductase ppzC hydroxylates peramine to yield the newly identified compound 8-hydroxyperamine whereas ppzD converts L-proline into trans-4-hydroxy-L-proline, a precursor of peramine biosynthesis. This chain is Sulfotransferase ppzF, found in Metarhizium rileyi (strain RCEF 4871) (Nomuraea rileyi).